Reading from the N-terminus, the 59-residue chain is U-scoloptoxin(23)-Er2a (59 aa).

It belongs to the scoloptoxin-23 family. Post-translationally, contains 1 disulfide bond. As to expression, expressed by the venom gland.

It is found in the secreted. The protein is U-scoloptoxin(23)-Er2a of Ethmostigmus rubripes (Giant centipede).